Here is a 519-residue protein sequence, read N- to C-terminus: Golgi-associated kinase 1B (519 aa).

Over 1 to 37 (MTCPDKPGQLINWFICSLCVPRVRKLWSSRRPRTRRN) the chain is Cytoplasmic. Residues 38-55 (LLLGTACAIYLGFLVSQV) traverse the membrane as a helical; Signal-anchor for type II membrane protein segment. The Extracellular segment spans residues 56-519 (GRASLQHGQA…HGVKVLPMNE (464 aa)). The interval 62–103 (HGQAAEKGPHRSRDTAEPSFPEIPLDGTLAPPESQGNGSTLQ) is disordered. Residues 68-77 (KGPHRSRDTA) show a composition bias toward basic and acidic residues. N-linked (GlcNAc...) asparagine glycosylation is present at N289.

This sequence belongs to the GASK family.

Its subcellular location is the golgi apparatus membrane. This is Golgi-associated kinase 1B from Homo sapiens (Human).